Consider the following 54-residue polypeptide: Ribulose bisphosphate carboxylase large chain (54 aa).

Positions Met-1 to Ser-2 are excised as a propeptide. Pro-3 is subject to N-acetylproline. Lys-14 is modified (N6,N6,N6-trimethyllysine).

Belongs to the RuBisCO large chain family. Type I subfamily. Heterohexadecamer of 8 large chains and 8 small chains.

Its subcellular location is the plastid. The protein resides in the chloroplast. It catalyses the reaction 2 (2R)-3-phosphoglycerate + 2 H(+) = D-ribulose 1,5-bisphosphate + CO2 + H2O. The enzyme catalyses D-ribulose 1,5-bisphosphate + O2 = 2-phosphoglycolate + (2R)-3-phosphoglycerate + 2 H(+). In terms of biological role, ruBisCO catalyzes two reactions: the carboxylation of D-ribulose 1,5-bisphosphate, the primary event in carbon dioxide fixation, as well as the oxidative fragmentation of the pentose substrate in the photorespiration process. Both reactions occur simultaneously and in competition at the same active site. This Rhamnus cathartica (Common buckthorn) protein is Ribulose bisphosphate carboxylase large chain (rbcL).